Reading from the N-terminus, the 452-residue chain is MQTVLAKIVADKAIWVEARKQQQPLASFQNEIQPSTRHFYDALQGARTAFILECKKASPSKGVIRDDFDPARIASIYQHYASAISVLTDEKYFQGSFDFLPVVSQSAPQPILCKDFIIDPYQIYLARYYQADACLLMLSVLDDEQYRQLSAVAHSLKMGVLTEVSNDEERERAIALGAKVVGINNRDLRDLSIDLNRTRQLAPKLGHGVTVISESGINTYGQVRELSHFANGFLIGSALMAHDDLNAAVRRVLLGENKVCGLTRAQDAKAACDAGAIYGGLIFVPSSPRAVSVEQAREVISGAPLQYVGVFKNADIADVCQKAAVLSLSAVQLHGSEDQAYVNALREALPKQVQIWKALSVSDALPARDYHHVDKYIFDNGQGGSGQRFDWSLLQGQPLDNVLLAGGLAADNCVQAAQVGCAGLDFNSGVESQPGIKDARLLASVFQTLRAY.

The segment at 1–256 (MQTVLAKIVA…AAVRRVLLGE (256 aa)) is indole-3-glycerol phosphate synthase. An N-(5'-phosphoribosyl)anthranilate isomerase region spans residues 257 to 452 (NKVCGLTRAQ…ASVFQTLRAY (196 aa)).

This sequence in the N-terminal section; belongs to the TrpC family. In the C-terminal section; belongs to the TrpF family. Monomer.

The enzyme catalyses N-(5-phospho-beta-D-ribosyl)anthranilate = 1-(2-carboxyphenylamino)-1-deoxy-D-ribulose 5-phosphate. It carries out the reaction 1-(2-carboxyphenylamino)-1-deoxy-D-ribulose 5-phosphate + H(+) = (1S,2R)-1-C-(indol-3-yl)glycerol 3-phosphate + CO2 + H2O. It functions in the pathway amino-acid biosynthesis; L-tryptophan biosynthesis; L-tryptophan from chorismate: step 3/5. The protein operates within amino-acid biosynthesis; L-tryptophan biosynthesis; L-tryptophan from chorismate: step 4/5. Functionally, bifunctional enzyme that catalyzes two sequential steps of tryptophan biosynthetic pathway. The first reaction is catalyzed by the isomerase, coded by the TrpF domain; the second reaction is catalyzed by the synthase, coded by the TrpC domain. This is Tryptophan biosynthesis protein TrpCF (trpC) from Salmonella typhimurium (strain LT2 / SGSC1412 / ATCC 700720).